A 121-amino-acid polypeptide reads, in one-letter code: Large ribosomal subunit protein uL22c (121 aa).

The protein belongs to the universal ribosomal protein uL22 family. Part of the 50S ribosomal subunit.

It localises to the plastid. The protein resides in the chloroplast. Functionally, this protein binds specifically to 23S rRNA. In terms of biological role, the globular domain of the protein is located near the polypeptide exit tunnel on the outside of the subunit, while an extended beta-hairpin is found that lines the wall of the exit tunnel in the center of the 70S ribosome. In Guillardia theta (Cryptophyte), this protein is Large ribosomal subunit protein uL22c (rpl22).